The following is a 447-amino-acid chain: Phosphoglucosamine mutase (447 aa).

The active-site Phosphoserine intermediate is Ser-106. Positions 106, 245, 247, and 249 each coordinate Mg(2+). Residue Ser-106 is modified to Phosphoserine.

The protein belongs to the phosphohexose mutase family. Requires Mg(2+) as cofactor. Activated by phosphorylation.

It catalyses the reaction alpha-D-glucosamine 1-phosphate = D-glucosamine 6-phosphate. Functionally, catalyzes the conversion of glucosamine-6-phosphate to glucosamine-1-phosphate. The polypeptide is Phosphoglucosamine mutase (Cupriavidus taiwanensis (strain DSM 17343 / BCRC 17206 / CCUG 44338 / CIP 107171 / LMG 19424 / R1) (Ralstonia taiwanensis (strain LMG 19424))).